Reading from the N-terminus, the 962-residue chain is Glycine dehydrogenase (decarboxylating) (962 aa).

K709 is subject to N6-(pyridoxal phosphate)lysine.

It belongs to the GcvP family. As to quaternary structure, the glycine cleavage system is composed of four proteins: P, T, L and H. Pyridoxal 5'-phosphate is required as a cofactor.

It carries out the reaction N(6)-[(R)-lipoyl]-L-lysyl-[glycine-cleavage complex H protein] + glycine + H(+) = N(6)-[(R)-S(8)-aminomethyldihydrolipoyl]-L-lysyl-[glycine-cleavage complex H protein] + CO2. The glycine cleavage system catalyzes the degradation of glycine. The P protein binds the alpha-amino group of glycine through its pyridoxal phosphate cofactor; CO(2) is released and the remaining methylamine moiety is then transferred to the lipoamide cofactor of the H protein. This is Glycine dehydrogenase (decarboxylating) from Shewanella sp. (strain ANA-3).